The chain runs to 444 residues: Aspartate--tRNA(Asp/Asn) ligase (444 aa).

Position 176 (glutamate 176) interacts with L-aspartate. Positions 198–201 are aspartate; the sequence is QLFK. Arginine 220 is an L-aspartate binding site. ATP contacts are provided by residues 220-222, 228-230, and glutamate 367; these read RAE and RHL. Mg(2+)-binding residues include glutamate 367 and serine 370. L-aspartate contacts are provided by serine 370 and arginine 374. Position 415–418 (415–418) interacts with ATP; sequence GCER.

It belongs to the class-II aminoacyl-tRNA synthetase family. Type 2 subfamily. In terms of assembly, homodimer. The cofactor is Mg(2+).

It is found in the cytoplasm. It carries out the reaction tRNA(Asx) + L-aspartate + ATP = L-aspartyl-tRNA(Asx) + AMP + diphosphate. In terms of biological role, aspartyl-tRNA synthetase with relaxed tRNA specificity since it is able to aspartylate not only its cognate tRNA(Asp) but also tRNA(Asn). Reaction proceeds in two steps: L-aspartate is first activated by ATP to form Asp-AMP and then transferred to the acceptor end of tRNA(Asp/Asn). The protein is Aspartate--tRNA(Asp/Asn) ligase of Methanosarcina barkeri (strain Fusaro / DSM 804).